A 462-amino-acid chain; its full sequence is Chromosomal replication initiator protein DnaA (462 aa).

The domain I, interacts with DnaA modulators stretch occupies residues 1 to 83 (MSLSLWQQCL…LRFEVGSKPA (83 aa)). Positions 83-125 (AARAHNNPVTASVSAPVAPVTRSAPMRPSWDNSPAQPELSYRS) are domain II. The interval 104–125 (RSAPMRPSWDNSPAQPELSYRS) is disordered. Polar residues predominate over residues 112–125 (WDNSPAQPELSYRS). The domain III, AAA+ region stretch occupies residues 126-342 (NVNPKHTFDN…GALNRVIANA (217 aa)). 4 residues coordinate ATP: Gly170, Gly172, Lys173, and Thr174. The tract at residues 343–462 (NFTGRAITID…FSNLIRTLSS (120 aa)) is domain IV, binds dsDNA.

The protein belongs to the DnaA family. As to quaternary structure, oligomerizes as a right-handed, spiral filament on DNA at oriC.

It is found in the cytoplasm. Plays an essential role in the initiation and regulation of chromosomal replication. ATP-DnaA binds to the origin of replication (oriC) to initiate formation of the DNA replication initiation complex once per cell cycle. Binds the DnaA box (a 9 base pair repeat at the origin) and separates the double-stranded (ds)DNA. Forms a right-handed helical filament on oriC DNA; dsDNA binds to the exterior of the filament while single-stranded (ss)DNA is stabiized in the filament's interior. The ATP-DnaA-oriC complex binds and stabilizes one strand of the AT-rich DNA unwinding element (DUE), permitting loading of DNA polymerase. After initiation quickly degrades to an ADP-DnaA complex that is not apt for DNA replication. Binds acidic phospholipids. The sequence is that of Chromosomal replication initiator protein DnaA from Yersinia pseudotuberculosis serotype O:1b (strain IP 31758).